We begin with the raw amino-acid sequence, 238 residues long: Ribonuclease PH (238 aa).

Residues Arg-86 and 124 to 126 (GTR) each bind phosphate.

This sequence belongs to the RNase PH family. Homohexameric ring arranged as a trimer of dimers.

It catalyses the reaction tRNA(n+1) + phosphate = tRNA(n) + a ribonucleoside 5'-diphosphate. Functionally, phosphorolytic 3'-5' exoribonuclease that plays an important role in tRNA 3'-end maturation. Removes nucleotide residues following the 3'-CCA terminus of tRNAs; can also add nucleotides to the ends of RNA molecules by using nucleoside diphosphates as substrates, but this may not be physiologically important. Probably plays a role in initiation of 16S rRNA degradation (leading to ribosome degradation) during starvation. This Anaeromyxobacter sp. (strain Fw109-5) protein is Ribonuclease PH.